Here is a 93-residue protein sequence, read N- to C-terminus: MSRSIKKPPFCAPHVLRLANRAIASNRNAIINIHSRSSVILHKFIGLTFGVHNGRTYVPVKVTDNIVGRKFGEFSPTRRFLGHAGDKKVSRKG.

Belongs to the universal ribosomal protein uS19 family.

In terms of biological role, protein S19 forms a complex with S13 that binds strongly to the 16S ribosomal RNA. This Anaplasma marginale (strain Florida) protein is Small ribosomal subunit protein uS19.